Reading from the N-terminus, the 365-residue chain is Peptide chain release factor 2 (365 aa).

N5-methylglutamine is present on Q251.

Belongs to the prokaryotic/mitochondrial release factor family. In terms of processing, methylated by PrmC. Methylation increases the termination efficiency of RF2.

It localises to the cytoplasm. Peptide chain release factor 2 directs the termination of translation in response to the peptide chain termination codons UGA and UAA. This is Peptide chain release factor 2 from Sulfurimonas denitrificans (strain ATCC 33889 / DSM 1251) (Thiomicrospira denitrificans (strain ATCC 33889 / DSM 1251)).